We begin with the raw amino-acid sequence, 130 residues long: Small ribosomal subunit protein uS9 (130 aa).

It belongs to the universal ribosomal protein uS9 family.

The sequence is that of Small ribosomal subunit protein uS9 from Caldicellulosiruptor bescii (strain ATCC BAA-1888 / DSM 6725 / KCTC 15123 / Z-1320) (Anaerocellum thermophilum).